The following is a 258-amino-acid chain: Sec-independent protein translocase protein TatC (258 aa).

Residues 2-23 are Cytoplasmic-facing; that stretch reads SVEDTQPLITHLIELRKRLLNC. Residues 24–44 form a helical membrane-spanning segment; the sequence is IISVIVIFLCLVYFANDIYHL. The Periplasmic portion of the chain corresponds to 45–75; the sequence is VSAPLIKQLPQGSTMIATDVASPFFTPIKLT. The helical transmembrane segment at 76–96 threads the bilayer; it reads FMVSLILSAPVILYQVWAFIA. Residues 97-115 are Cytoplasmic-facing; it reads PALYKHERRLVVPLLVSSS. A helical membrane pass occupies residues 116–136; the sequence is LLFYIGMAFAYFVVFPLAFGF. At 137 to 156 the chain is on the periplasmic side; that stretch reads LANTAPEGVQVSTDIASYLS. A helical membrane pass occupies residues 157–177; the sequence is FVMALFMAFGVSFEVPVAIVL. The Cytoplasmic portion of the chain corresponds to 178-192; that stretch reads LCWMGITSPEDLRKK. A helical transmembrane segment spans residues 193–210; that stretch reads RPYVLVGAFVVGMLLTPP. A topological domain (periplasmic) is located at residue aspartate 211. The chain crosses the membrane as a helical span at residues 212-232; sequence VFSQTLLAIPMYCLFEIGVFF. Residues 233–258 lie on the Cytoplasmic side of the membrane; the sequence is SRFYVGKGRNREEENDAEAESEKTEE.

It belongs to the TatC family. As to quaternary structure, the Tat system comprises two distinct complexes: a TatABC complex, containing multiple copies of TatA, TatB and TatC subunits, and a separate TatA complex, containing only TatA subunits. Substrates initially bind to the TatABC complex, which probably triggers association of the separate TatA complex to form the active translocon.

Its subcellular location is the cell inner membrane. Functionally, part of the twin-arginine translocation (Tat) system that transports large folded proteins containing a characteristic twin-arginine motif in their signal peptide across membranes. Together with TatB, TatC is part of a receptor directly interacting with Tat signal peptides. This is Sec-independent protein translocase protein TatC from Escherichia coli O6:H1 (strain CFT073 / ATCC 700928 / UPEC).